Reading from the N-terminus, the 446-residue chain is MITIKKGLALPIAGAPSQVINDGKTIKKVALLGEEYVGMRPTMHVRVGDEVKKAQVLFEDKKNPGVKFTAPAAGKVIEINRGAKRVLQSVVIEVAGEEQVTFDKFEAAQLAGLDREVIKTQLVESGLWTALRTRPFSKVPAIESATKAIFVTAMDTNPLAAQPELIITEQQEAFVAGLDILSALTEGKVYVCKSGTSLPSSSQSNVEEHVFDGPHPAGLAGTHMHFLYPVNAENVAWSINYQDVIAFGQLFLTGELYTDRVVSLAGPVVNNPRLLRTVVGASLEDLTDSELMPGEVRVISGSVLSGTQASGPHAYLGRYHQQVSVLREGRDKELFGWATPGKNKFSITKSFLGHIFKGQLFNMTTTTNGSDRAMVPIGNYERVMPLDMEPTLLLRDLCAGDTDSAQTLGALELDEEDLALCTFVCPGKYEYGQLLRECLDTIVKEG.

This sequence belongs to the NqrA family. Composed of six subunits; NqrA, NqrB, NqrC, NqrD, NqrE and NqrF.

It catalyses the reaction a ubiquinone + n Na(+)(in) + NADH + H(+) = a ubiquinol + n Na(+)(out) + NAD(+). Functionally, NQR complex catalyzes the reduction of ubiquinone-1 to ubiquinol by two successive reactions, coupled with the transport of Na(+) ions from the cytoplasm to the periplasm. NqrA to NqrE are probably involved in the second step, the conversion of ubisemiquinone to ubiquinol. In Vibrio campbellii (strain ATCC BAA-1116), this protein is Na(+)-translocating NADH-quinone reductase subunit A.